The primary structure comprises 417 residues: MLKREMNIADYDADLWQAMEQEVVRQEEHIELIASENYTSPRVMQAQGSQLTNKYAEGYPGKRYYGGCEYVDIVEQLAIDRAKALFGADYANVQPHSGSQANFAVYTALLQPGDTILGMNLAHGGHLTHGSPVNLSGKLYKVIPYGIDESGKIDYDEMAELARTHQPKMIVGGFSAYSGVVDWAKMREIADSIGAYLFVDMAHVAGLIAADVYPNPVPHAHIVTTTTHKTLAGPRGGLILAKGGDEDLYKKLNSAVFPGGQGGPLMHVIAGKAVALKEAMEPEFKVYQQQVAKNAKAMVEVFLSRGFNVVSGATSNHLFLLDLVSKNLTGKEADAALGRANITVNKNSVPNDPKSPFVTSGIRIGTPAATRRGFKEAEVRELAGWICDVLDNINDEATIERVKQKVLDICARFPVYA.

(6S)-5,6,7,8-tetrahydrofolate is bound by residues leucine 121 and 125–127 (GHL). Lysine 229 is modified (N6-(pyridoxal phosphate)lysine). Position 355–357 (355–357 (SPF)) interacts with (6S)-5,6,7,8-tetrahydrofolate.

The protein belongs to the SHMT family. As to quaternary structure, homodimer. Pyridoxal 5'-phosphate serves as cofactor.

The protein localises to the cytoplasm. It catalyses the reaction (6R)-5,10-methylene-5,6,7,8-tetrahydrofolate + glycine + H2O = (6S)-5,6,7,8-tetrahydrofolate + L-serine. It functions in the pathway one-carbon metabolism; tetrahydrofolate interconversion. The protein operates within amino-acid biosynthesis; glycine biosynthesis; glycine from L-serine: step 1/1. Functionally, catalyzes the reversible interconversion of serine and glycine with tetrahydrofolate (THF) serving as the one-carbon carrier. This reaction serves as the major source of one-carbon groups required for the biosynthesis of purines, thymidylate, methionine, and other important biomolecules. Also exhibits THF-independent aldolase activity toward beta-hydroxyamino acids, producing glycine and aldehydes, via a retro-aldol mechanism. This is Serine hydroxymethyltransferase 1 from Pectobacterium atrosepticum (strain SCRI 1043 / ATCC BAA-672) (Erwinia carotovora subsp. atroseptica).